The following is a 170-amino-acid chain: ATP synthase subunit b (170 aa).

The helical transmembrane segment at phenylalanine 15–proline 37 threads the bilayer. The segment at alanine 72 to arginine 98 is disordered.

It belongs to the ATPase B chain family. F-type ATPases have 2 components, F(1) - the catalytic core - and F(0) - the membrane proton channel. F(1) has five subunits: alpha(3), beta(3), gamma(1), delta(1), epsilon(1). F(0) has four main subunits: a(1), b(1), b'(1) and c(10-14). The alpha and beta chains form an alternating ring which encloses part of the gamma chain. F(1) is attached to F(0) by a central stalk formed by the gamma and epsilon chains, while a peripheral stalk is formed by the delta, b and b' chains.

It is found in the cellular thylakoid membrane. F(1)F(0) ATP synthase produces ATP from ADP in the presence of a proton or sodium gradient. F-type ATPases consist of two structural domains, F(1) containing the extramembraneous catalytic core and F(0) containing the membrane proton channel, linked together by a central stalk and a peripheral stalk. During catalysis, ATP synthesis in the catalytic domain of F(1) is coupled via a rotary mechanism of the central stalk subunits to proton translocation. Its function is as follows. Component of the F(0) channel, it forms part of the peripheral stalk, linking F(1) to F(0). This is ATP synthase subunit b from Prochlorococcus marinus (strain MIT 9215).